Consider the following 759-residue polypeptide: Mitogen-activated protein kinase kinase kinase 1a (759 aa).

Composition is skewed to basic and acidic residues over residues 1-17 (MIEE…DRGS), 25-36 (SFEDKGSSHDWK), and 52-64 (AKKD…KVDS). 4 disordered regions span residues 1–90 (MIEE…NLSK), 122–160 (LGIE…SHDF), 165–184 (SRVD…LAPM), and 195–239 (RKHR…PDPL). Residues 72–85 (VHSTSSPRLSPASS) are compositionally biased toward low complexity. The Protein kinase domain occupies 426-679 (WAKGEFLGSG…CDMLLAHPFI (254 aa)). ATP contacts are provided by residues 432-440 (LGSGTFGSV) and lysine 454. Aspartate 549 acts as the Proton acceptor in catalysis.

It belongs to the protein kinase superfamily. STE Ser/Thr protein kinase family. MAP kinase kinase kinase subfamily.

It is found in the cell membrane. The catalysed reaction is L-seryl-[protein] + ATP = O-phospho-L-seryl-[protein] + ADP + H(+). The enzyme catalyses L-threonyl-[protein] + ATP = O-phospho-L-threonyl-[protein] + ADP + H(+). In terms of biological role, the CERK1, MEKK1a/b, MKK1a/b/c and MPK4a/b proteins are involved in pathogen defense. The pathway induces rapid growth inhibition, cell wall depositions and accumulation of defense-related transcripts. This protein is required for responses to chitin and acts redundantly with MEKK1b. This Physcomitrium patens (Spreading-leaved earth moss) protein is Mitogen-activated protein kinase kinase kinase 1a.